Here is a 252-residue protein sequence, read N- to C-terminus: Orotidine 5'-phosphate decarboxylase (252 aa).

Residues Asp24, Lys46, 73 to 82 (DLKFHDIPNT), Thr137, Arg199, Gln208, Gly228, and Arg229 each bind substrate. Lys75 (proton donor) is an active-site residue.

Belongs to the OMP decarboxylase family. Type 1 subfamily. Homodimer.

It catalyses the reaction orotidine 5'-phosphate + H(+) = UMP + CO2. Its pathway is pyrimidine metabolism; UMP biosynthesis via de novo pathway; UMP from orotate: step 2/2. In terms of biological role, catalyzes the decarboxylation of orotidine 5'-monophosphate (OMP) to uridine 5'-monophosphate (UMP). This chain is Orotidine 5'-phosphate decarboxylase, found in Moorella thermoacetica (strain ATCC 39073 / JCM 9320).